A 509-amino-acid polypeptide reads, in one-letter code: tRNA (guanine(37)-N(1))-methyltransferase (509 aa).

The transit peptide at 1-57 (MVLWILWRPFGFSRRLLKLERHSITESKSLIPLAWTSLTQTLSESPGIFLLGQRKRF) directs the protein to the mitochondrion. Residues His289, 327 to 328 (DL), 355 to 356 (DG), and Asn387 contribute to the S-adenosyl-L-methionine site. The disordered stretch occupies residues 478-509 (TKNPENHEDPPLKRQRTAEAFSDEKTQIASNT).

The protein belongs to the class I-like SAM-binding methyltransferase superfamily. TRM5/TYW2 family. As to quaternary structure, monomer.

The protein resides in the mitochondrion matrix. The protein localises to the nucleus. Its subcellular location is the cytoplasm. The enzyme catalyses guanosine(37) in tRNA + S-adenosyl-L-methionine = N(1)-methylguanosine(37) in tRNA + S-adenosyl-L-homocysteine + H(+). In terms of biological role, involved in mitochondrial tRNA methylation. Specifically methylates the N1 position of guanosine-37 in various tRNAs. Methylation is not dependent on the nature of the nucleoside 5' of the target nucleoside. This is the first step in the biosynthesis of wybutosine (yW), a modified base adjacent to the anticodon of tRNAs and required for accurate decoding. The protein is tRNA (guanine(37)-N(1))-methyltransferase of Macaca mulatta (Rhesus macaque).